A 126-amino-acid chain; its full sequence is Protein LLP homolog (126 aa).

Basic residues predominate over residues 1–21 (MAKSLRSKWRRKMRAEKRKKV). 2 disordered regions span residues 1–22 (MAKS…KKVA) and 53–126 (VPPE…RLAW). Positions 73 to 94 (DGGKMDLDTKRNKKTMLDEHGR) are enriched in basic and acidic residues. Basic residues predominate over residues 103–126 (QAKKLKAKRVGKNGKPKPKKRLAW).

This sequence belongs to the learning-associated protein family.

The protein localises to the nucleus. It localises to the nucleolus. Its subcellular location is the chromosome. In terms of biological role, regulates dendritic and spine growth and synaptic transmission. In Danio rerio (Zebrafish), this protein is Protein LLP homolog (llph).